The following is a 409-amino-acid chain: Nucleoprotein (409 aa).

Disordered regions lie at residues 1–32 (MASG…SSGN), 46–69 (SPPL…QQHG), 120–193 (GADT…SGAE), and 238–259 (VDQV…DKMN). Residues 15–31 (PVIKLGGPKPPKVGSSG) are compositionally biased toward low complexity. An RNA-binding region spans residues 29 to 160 (SSGNASWFQA…GNFRWDFIPL (132 aa)). Residues 31-156 (GNASWFQAIK…GGPDGNFRWD (126 aa)) form the CoV N NTD domain. The span at 162–179 (RGRSGKSTAASSAASSRA) shows a compositional bias: low complexity. Composition is skewed to basic and acidic residues over residues 180-192 (PSRE…RSGA) and 247-259 (KGKE…DKMN). A Phosphoserine; by host modification is found at Ser-190. Residues 215–331 (TKAKADEMAH…QCVDGVGTRP (117 aa)) form the CoV N CTD domain. Residues 226 to 333 (RYCKRTIPPG…VDGVGTRPKD (108 aa)) form a dimerization region. Residues Cys-320 and Cys-323 are joined by a disulfide bond. A disordered region spans residues 327–409 (VGTRPKDDEP…GDSALGENEL (83 aa)). Over residues 341-354 (RSSSRPATRTSSPA) the composition is skewed to low complexity. Residues 358 to 367 (PRPKKEKKTK) show a composition bias toward basic residues. A compositionally biased stretch (basic and acidic residues) spans 368-384 (KQDDEVDKALTSDEERN). Thr-378 bears the Phosphothreonine; by host mark. Position 379 is a phosphoserine; by host (Ser-379).

This sequence belongs to the gammacoronavirus nucleocapsid protein family. As to quaternary structure, homooligomer. Both monomeric and oligomeric forms interact with RNA. Interacts with protein M. Interacts with NSP3; this interaction serves to tether the genome to the newly translated replicase-transcriptase complex at a very early stage of infection. In terms of processing, ADP-ribosylated. The ADP-ribosylation is retained in the virion during infection. Phosphorylated on serine and threonine residues.

The protein localises to the virion. Its subcellular location is the host endoplasmic reticulum-Golgi intermediate compartment. It is found in the host Golgi apparatus. Functionally, packages the positive strand viral genome RNA into a helical ribonucleocapsid (RNP) and plays a fundamental role during virion assembly through its interactions with the viral genome and membrane protein M. Plays an important role in enhancing the efficiency of subgenomic viral RNA transcription as well as viral replication. This Gallus gallus (Chicken) protein is Nucleoprotein.